The sequence spans 440 residues: Transposon Ty1-JR1 Gag polyprotein (440 aa).

The segment covering 1 to 16 (MESQQLSQHSHISHGS) has biased composition (low complexity). 3 disordered regions span residues 1–93 (MESQ…MMTQ), 126–173 (PQSQ…RPPP), and 352–440 (GSRN…PGTY). Polar residues-rich tracts occupy residues 48 to 60 (TKAN…TPAS) and 127 to 152 (QSQF…GNTF). The segment covering 153–165 (TDSSSADSDMTST) has biased composition (low complexity). The RNA-binding stretch occupies residues 299–401 (NNGIHINNKV…NSKSKTARAH (103 aa)). Residues 402 to 418 (NVSTSNNSPSTDNDSIS) are compositionally biased toward low complexity. Serine 416 carries the post-translational modification Phosphoserine. The span at 419–428 (KSTTEPIQLN) shows a compositional bias: polar residues. Residues 429–440 (NKHDLHLRPGTY) are compositionally biased toward basic and acidic residues.

As to quaternary structure, homotrimer.

The protein resides in the cytoplasm. In terms of biological role, capsid protein (CA) is the structural component of the virus-like particle (VLP), forming the shell that encapsulates the retrotransposons dimeric RNA genome. The particles are assembled from trimer-clustered units and there are holes in the capsid shells that allow for the diffusion of macromolecules. CA also has nucleocapsid-like chaperone activity, promoting primer tRNA(i)-Met annealing to the multipartite primer-binding site (PBS), dimerization of Ty1 RNA and initiation of reverse transcription. The sequence is that of Transposon Ty1-JR1 Gag polyprotein (TY1A-JR1) from Saccharomyces cerevisiae (strain ATCC 204508 / S288c) (Baker's yeast).